Here is a 304-residue protein sequence, read N- to C-terminus: Undecaprenyl-diphosphatase (304 aa).

Helical transmembrane passes span 5 to 25 (FLFI…EFVP), 47 to 67 (GFPE…VVVL), 72 to 92 (ISSS…LKTS), 111 to 131 (FGIN…LFHD), 137 to 157 (LFST…LIVI), 209 to 231 (ISGL…AMVG), 248 to 268 (TNWI…LVVI), and 283 to 303 (FAIY…TKVI).

It belongs to the UppP family.

The protein resides in the cell membrane. The catalysed reaction is di-trans,octa-cis-undecaprenyl diphosphate + H2O = di-trans,octa-cis-undecaprenyl phosphate + phosphate + H(+). In terms of biological role, catalyzes the dephosphorylation of undecaprenyl diphosphate (UPP). Confers resistance to bacitracin. The polypeptide is Undecaprenyl-diphosphatase (Clostridium perfringens (strain 13 / Type A)).